The sequence spans 110 residues: U1-lycotoxin-Ls1gg (110 aa).

An N-terminal signal peptide occupies residues Met1 to Ala20. The propeptide occupies Glu21–Arg44. Disulfide bonds link Cys54-Cys71, Cys61-Cys89, and Cys73-Cys87.

The protein belongs to the neurotoxin 19 (CSTX) family. 03 subfamily. As to expression, expressed by the venom gland.

The protein localises to the secreted. The chain is U1-lycotoxin-Ls1gg from Lycosa singoriensis (Wolf spider).